Here is a 405-residue protein sequence, read N- to C-terminus: Arginine biosynthesis bifunctional protein ArgJ (405 aa).

6 residues coordinate substrate: threonine 152, lysine 178, threonine 189, glutamate 276, asparagine 400, and threonine 405. The active-site Nucleophile is the threonine 189.

It belongs to the ArgJ family. Heterotetramer of two alpha and two beta chains.

It localises to the cytoplasm. It catalyses the reaction N(2)-acetyl-L-ornithine + L-glutamate = N-acetyl-L-glutamate + L-ornithine. It carries out the reaction L-glutamate + acetyl-CoA = N-acetyl-L-glutamate + CoA + H(+). Its pathway is amino-acid biosynthesis; L-arginine biosynthesis; L-ornithine and N-acetyl-L-glutamate from L-glutamate and N(2)-acetyl-L-ornithine (cyclic): step 1/1. The protein operates within amino-acid biosynthesis; L-arginine biosynthesis; N(2)-acetyl-L-ornithine from L-glutamate: step 1/4. Catalyzes two activities which are involved in the cyclic version of arginine biosynthesis: the synthesis of N-acetylglutamate from glutamate and acetyl-CoA as the acetyl donor, and of ornithine by transacetylation between N(2)-acetylornithine and glutamate. This is Arginine biosynthesis bifunctional protein ArgJ from Pseudomonas syringae pv. syringae (strain B728a).